The following is a 520-amino-acid chain: Glutamate decarboxylase-like protein FG08083 (520 aa).

86-88 (KLV) provides a ligand contact to substrate. An N6-(pyridoxal phosphate)lysine modification is found at Lys-300. Residues 338-357 (KNGVSSEQSANTNGSEKESW) are disordered. Residues 340–351 (GVSSEQSANTNG) show a composition bias toward polar residues. Arg-492 is a substrate binding site.

This sequence belongs to the group II decarboxylase family. It depends on pyridoxal 5'-phosphate as a cofactor.

Its pathway is mycotoxin biosynthesis. Its function is as follows. Glutamate decarboxylase-like protein; part of the gene cluster that mediates the biosynthesis of butenolide, a mycotoxin that shows antibiotic activity but does not seem to play a major role in the spread of head blight in wheat. Butenolide is derived from glutamic acid via a 4-acetamido-2-butenoic acid intermediate. The predicted function of the NADH:flavin oxidoreductase FG08077, the cytochrome P450 monooxygenase FG08079, the decarboxylase FG08083, and the putative acetyltransferase FG08082 are consistent with this pathway, however, the respective activities of the butelonide biosynthesis cluster enzymes have still to be experimentally determined. In Gibberella zeae (strain ATCC MYA-4620 / CBS 123657 / FGSC 9075 / NRRL 31084 / PH-1) (Wheat head blight fungus), this protein is Glutamate decarboxylase-like protein FG08083.